We begin with the raw amino-acid sequence, 426 residues long: 4-hydroxy-3-methylbut-2-en-1-yl diphosphate synthase (flavodoxin) (426 aa).

The tract at residues 1-20 (MLDRDLTLSDDAYESSPVSR) is disordered. Residues Cys320, Cys323, Cys366, and Glu373 each coordinate [4Fe-4S] cluster.

This sequence belongs to the IspG family. Requires [4Fe-4S] cluster as cofactor.

The catalysed reaction is (2E)-4-hydroxy-3-methylbut-2-enyl diphosphate + oxidized [flavodoxin] + H2O + 2 H(+) = 2-C-methyl-D-erythritol 2,4-cyclic diphosphate + reduced [flavodoxin]. It functions in the pathway isoprenoid biosynthesis; isopentenyl diphosphate biosynthesis via DXP pathway; isopentenyl diphosphate from 1-deoxy-D-xylulose 5-phosphate: step 5/6. Converts 2C-methyl-D-erythritol 2,4-cyclodiphosphate (ME-2,4cPP) into 1-hydroxy-2-methyl-2-(E)-butenyl 4-diphosphate. This chain is 4-hydroxy-3-methylbut-2-en-1-yl diphosphate synthase (flavodoxin), found in Wolbachia pipientis subsp. Culex pipiens (strain wPip).